Here is a 124-residue protein sequence, read N- to C-terminus: Schlafen-like protein (124 aa).

The protein belongs to the Schlafen family. Subgroup poxviridae B3 subfamily.

The chain is Schlafen-like protein from Homo sapiens (Human).